The sequence spans 470 residues: Cell division protein FtsA (470 aa).

The segment at 416–470 (NKKDTHENEVESTDEEIYQSEDNHQEHKQNHEHVQDKDKDKEESKFKKLMKSLFE) is disordered. Positions 425-434 (VESTDEEIYQ) are enriched in acidic residues. Residues 436 to 461 (EDNHQEHKQNHEHVQDKDKDKEESKF) show a composition bias toward basic and acidic residues.

The protein belongs to the FtsA/MreB family. In terms of assembly, self-interacts. Interacts with FtsZ.

The protein localises to the cell membrane. Its function is as follows. Cell division protein that is involved in the assembly of the Z ring. May serve as a membrane anchor for the Z ring. The chain is Cell division protein FtsA from Staphylococcus aureus (strain NCTC 8325 / PS 47).